The sequence spans 94 residues: Protein S100-A1 (94 aa).

EF-hand domains are found at residues 13 to 48 (INVF…FLDV) and 50 to 85 (KDAD…LTVA). Residues Lys-28, Glu-33, Asp-63, Asn-65, Asp-67, Glu-69, and Glu-74 each contribute to the Ca(2+) site. At Cys-86 the chain carries S-nitrosocysteine.

It belongs to the S-100 family. In terms of assembly, dimer of either two alpha chains, or two beta chains, or one alpha and one beta chain. Also forms heterodimers with S100P. Interacts with AGER. Interacts with CAPZA1. Interacts with FKBP4. Interacts with RYR1 and RYR2. Interacts with CACYBP in a calcium-dependent manner. Interacts with PPP5C (via TPR repeats); the interaction is calcium-dependent and modulates PPP5C activity. Interacts with ATP2A2 and PLN in a Ca(2+)-dependent manner. Interacts with mitochondrial F1-ATPase subunits ATP5F1A and ATP5F1B; these interactions increase F1-ATPase activity. Glutathionylated; glutathionylation increases affinity to calcium about 10-fold. In terms of tissue distribution, expressed in the cardiac and the skeletal muscles.

The protein localises to the cytoplasm. The protein resides in the sarcoplasmic reticulum. It is found in the mitochondrion. Its function is as follows. Small calcium binding protein that plays important roles in several biological processes such as Ca(2+) homeostasis, chondrocyte biology and cardiomyocyte regulation. In response to an increase in intracellular Ca(2+) levels, binds calcium which triggers conformational changes. These changes allow interactions with specific target proteins and modulate their activity. Regulates a network in cardiomyocytes controlling sarcoplasmic reticulum Ca(2+) cycling and mitochondrial function through interaction with the ryanodine receptors RYR1 and RYR2, sarcoplasmic reticulum Ca(2+)-ATPase/ATP2A2 and mitochondrial F1-ATPase. Facilitates diastolic Ca(2+) dissociation and myofilament mechanics in order to improve relaxation during diastole. In Mus musculus (Mouse), this protein is Protein S100-A1 (S100a1).